The chain runs to 312 residues: Beta-ketoacyl-[acyl-carrier-protein] synthase III (312 aa).

Catalysis depends on residues cysteine 112 and histidine 237. Residues 238–242 form an ACP-binding region; it reads QANIR. The active site involves asparagine 267.

Belongs to the thiolase-like superfamily. FabH family. As to quaternary structure, homodimer.

Its subcellular location is the cytoplasm. The enzyme catalyses malonyl-[ACP] + acetyl-CoA + H(+) = 3-oxobutanoyl-[ACP] + CO2 + CoA. The protein operates within lipid metabolism; fatty acid biosynthesis. Its function is as follows. Catalyzes the condensation reaction of fatty acid synthesis by the addition to an acyl acceptor of two carbons from malonyl-ACP. Catalyzes the first condensation reaction which initiates fatty acid synthesis and may therefore play a role in governing the total rate of fatty acid production. Possesses both acetoacetyl-ACP synthase and acetyl transacylase activities. Its substrate specificity determines the biosynthesis of branched-chain and/or straight-chain of fatty acids. The protein is Beta-ketoacyl-[acyl-carrier-protein] synthase III of Listeria welshimeri serovar 6b (strain ATCC 35897 / DSM 20650 / CCUG 15529 / CIP 8149 / NCTC 11857 / SLCC 5334 / V8).